The following is a 631-amino-acid chain: Beta-galactosidase-1-like protein 3 (631 aa).

The active-site Proton donor is Glu-203. Glu-277 functions as the Nucleophile in the catalytic mechanism.

The protein belongs to the glycosyl hydrolase 35 family.

The sequence is that of Beta-galactosidase-1-like protein 3 (Glb1l3) from Rattus norvegicus (Rat).